Here is a 594-residue protein sequence, read N- to C-terminus: MNADFLLPYYTAQSGSSMSMFNTTMGKLQRQLYKGEYDIFKYAPIFESDFIQITKRGEVIDVHNRVRMVTMGIARTSPILPLPDVMLLARPATGCEEYAGHGQATKRKKRKAAKNLELTRLLPLRFVRISVQDHEKQQLRLKFATGRSCYLQLCPALDTRDDLFAYWEKLIYLLRPPMESNSSTCGIPAEDMMWMPVFQEDRRSLGAVNLQGKGDQDQVSIQSLHMVSEVCGATSAAYAGGEGLQNDFNKPTNVLNASIPKTSTELAEEPATGGIKEAAAAGAAAGAATGTVAGALSVAAANSAPGQVSAAIAGAATIGAGGNKGNMALAGTASMAPNSTKVAVAGAAGKSSEHVSSASMSLSREGSVSLAIAGVVLTSRTAAEADMDAAAGPPVSTRQSKSSLSGQHGRERTQASAEGCKEGRERREKDRALGRSSHRRRTGESRHKTRGDKIAQKSSSRSSFSHRANRDDKKEKGCGNPGSSRHRDSHKGVSHTPISKESRTSHKSGRSLWTTSSGSSKGLGRVSSFLRNVRANLTTKVVGTPHGRDVNVMAKMAERSTNVAIAETAEGGQGLETVGSMTPDIMETVTFEAH.

Positions Met-387–Gly-524 are disordered. Polar residues predominate over residues Ser-396–Gly-406. 3 stretches are compositionally biased toward basic and acidic residues: residues His-408 to Leu-433, Thr-442 to Ala-455, and Ala-468 to Gly-477. A compositionally biased stretch (polar residues) spans Ser-511–Ser-520.

Belongs to the GARIN family. As to quaternary structure, interacts (via N-terminus) with RAB2B (in GTP-bound form).

It is found in the golgi apparatus. Its function is as follows. RAB2B effector protein required for the compacted Golgi morphology, probably through interaction with small GTPase RAB2B. The protein is Golgi-associated RAB2 interactor protein 4 of Homo sapiens (Human).